The sequence spans 156 residues: WASQVSENRPVCKAIIQGKQFEGLVDTGADVSIIALNQWPKNWPKQKAVTGLVGIGTASEVYQSTEILHCLGPDNQESTVQPMITSIPLNLWGRDLLQQWGAEITMPAPLYSPTSQKIMTKMGYILGKGLGKNEDGIKIPVEAKINQKREGIGYPF.

In terms of domain architecture, Peptidase A2 spans 21-96 (FEGLVDTGAD…IPLNLWGRDL (76 aa)). The active site involves aspartate 26. Residues 111–156 (YSPTSQKIMTKMGYILGKGLGKNEDGIKIPVEAKINQKREGIGYPF) form the G-patch domain.

The protein belongs to the peptidase A2 family. HERV class-II K(HML-2) subfamily. In terms of assembly, active as a homodimer. In terms of processing, autoproteolytically processed at the N-terminus. Expected C-terminal autoprocessing not detected. The sequence shown is that of the processed Pro protein.

It catalyses the reaction Processing at the authentic HIV-1 PR recognition site and release of the mature p17 matrix and the p24 capsid protein, as a result of the cleavage of the -SQNY-|-PIVQ- cleavage site.. In terms of biological role, retroviral proteases have roles in the processing of the primary translation products and the maturation of the viral particle. Endogenous Pro proteins may have kept, lost or modified their original function during evolution. The sequence is that of Endogenous retrovirus group K member 19 Pro protein (ERVK-19) from Homo sapiens (Human).